A 302-amino-acid polypeptide reads, in one-letter code: Acetyl-coenzyme A carboxylase carboxyl transferase subunit beta (302 aa).

A CoA carboxyltransferase N-terminal domain is found at 25–294 (VWTKCDSCGQ…PHFDEAAPVS (270 aa)). The Zn(2+) site is built by cysteine 29, cysteine 32, cysteine 48, and cysteine 51. The segment at 29 to 51 (CDSCGQVLYRAELERNLEVCPKC) adopts a C4-type zinc-finger fold. Residues 281–302 (NQPQPHFDEAAPVSEQENQADA) form a disordered region.

Belongs to the AccD/PCCB family. As to quaternary structure, acetyl-CoA carboxylase is a heterohexamer composed of biotin carboxyl carrier protein (AccB), biotin carboxylase (AccC) and two subunits each of ACCase subunit alpha (AccA) and ACCase subunit beta (AccD). Zn(2+) is required as a cofactor.

It localises to the cytoplasm. The catalysed reaction is N(6)-carboxybiotinyl-L-lysyl-[protein] + acetyl-CoA = N(6)-biotinyl-L-lysyl-[protein] + malonyl-CoA. The protein operates within lipid metabolism; malonyl-CoA biosynthesis; malonyl-CoA from acetyl-CoA: step 1/1. Its function is as follows. Component of the acetyl coenzyme A carboxylase (ACC) complex. Biotin carboxylase (BC) catalyzes the carboxylation of biotin on its carrier protein (BCCP) and then the CO(2) group is transferred by the transcarboxylase to acetyl-CoA to form malonyl-CoA. The protein is Acetyl-coenzyme A carboxylase carboxyl transferase subunit beta of Serratia proteamaculans (strain 568).